Reading from the N-terminus, the 213-residue chain is Putative manganese efflux pump MntP (213 aa).

Helical transmembrane passes span 3-23, 36-56, 67-87, 130-150, 152-172, and 187-207; these read ILSI…VSVA, ALKV…IGWG, AFDH…MIFE, LAIA…FLGI, IVQT…LGVI, and IVGG…HTGI.

The protein belongs to the MntP (TC 9.B.29) family.

It is found in the cell membrane. Probably functions as a manganese efflux pump. The chain is Putative manganese efflux pump MntP from Clostridium perfringens (strain 13 / Type A).